The primary structure comprises 20 residues: Thylakoid lumenal 20 kDa protein (20 aa).

The tract at residues 1-20 is disordered; the sequence is RDVDVGSFLPKSPSDPSMVL.

It localises to the plastid. The protein localises to the chloroplast thylakoid lumen. The polypeptide is Thylakoid lumenal 20 kDa protein (Spinacia oleracea (Spinach)).